Consider the following 506-residue polypeptide: MGDRSEVPGPARPGPPGIGPEGPLGQLLRRHRSPSPTRGGQEPRRVRRRVLVQQEEEVVSGSPSGPRGDRSEVPGPARPGPPGIGPEGPLGQLLRRHRSPSPTRGGQEPRRVRRRVLVQQEEEVVSGSPSGPRGDRSEVPGPARPGPPGIGPEGPLGQLLRRHRSPSPTRGGQEPRRVRRRVLVQQEEEVVSGSPSGPRGDRSEVPGPARPGPPGIGPEGPLGQLLRRHRSPSPTRGGQEPRRVRRRVLVQQEEEVVSGSPSGPRGDRSEVPGPARPGPPGIGPEGPLGQLLRRHRSPSPTRGGQEPRRVRRRVLVQQEEEVVSGSPSGPRGDRSEVPGPARPGPPGIGPEGPLGQLLRRHRSPSPTRGGQEPRRVRRRVLVQQEEEVVSGSPSGPRGDRSEVPGPARPGPPGIGPEGPLGQLLRRHRSPSPTRGGQEPRRVRRRVLVQQEEEVVSGSPSGPLRPRPQPPAQSLREWLLRISERFDPHPVATRRQSVYIEEEEDED.

The interval 1-471 (MGDRSEVPGP…PLRPRPQPPA (471 aa)) is disordered. Position 35 is a phosphoserine; by host (serine 35).

Belongs to the lymphocryptovirus EBNA-LP family. In terms of assembly, homooligomer. Interacts with host SP100; this interaction is important for EBNA-LP coactivator activity. Interacts with host HAX1, ERR1 and HSPA2. Interacts with host PRKDC and AKAP8L; these interactions modulate the coactivator function of EBNA-LP. Post-translationally, phosphorylated by the cellular protein kinase cdc2.

It localises to the host nucleus. Functionally, plays an important role in the establishment of B-cell immortalization by acting as an EBNA2 coactivator. This transcriptional activation preferentially enhances the expression of the major viral protein LMP1. The interaction between EBNA-LP and host SP100 correlates with coactivation of EBNA2 and the relocalization of SP100 from PML nuclear bodies into nucleoplasm. The polypeptide is Epstein-Barr nuclear antigen leader protein (EBNA-LP) (Epstein-Barr virus (strain AG876) (HHV-4)).